The chain runs to 112 residues: Nitrogenase-stabilizing/protective protein NifW (112 aa).

This sequence belongs to the NifW family. In terms of assembly, homotrimer; associates with NifD.

In terms of biological role, may protect the nitrogenase Fe-Mo protein from oxidative damage. This chain is Nitrogenase-stabilizing/protective protein NifW, found in Rhodopseudomonas palustris (strain BisA53).